A 59-amino-acid polypeptide reads, in one-letter code: Large ribosomal subunit protein bL32 (59 aa).

The segment at 1 to 59 (MAVQQNRKSRSRRGMRRSHDALSSAALSIDPTTGEKHRRHHVTPDGFYRGKKVVEVSQD) is disordered. Over residues 7 to 16 (RKSRSRRGMR) the composition is skewed to basic residues.

It belongs to the bacterial ribosomal protein bL32 family.

This is Large ribosomal subunit protein bL32 from Hahella chejuensis (strain KCTC 2396).